Consider the following 117-residue polypeptide: UPF0295 protein GTNG_0491 (117 aa).

Transmembrane regions (helical) follow at residues 12–32 (IRTFALSLIFVGVIVMYLGLF) and 42–62 (LFMVLGLLFLVASGIVYFWIG).

Belongs to the UPF0295 family.

The protein localises to the cell membrane. The sequence is that of UPF0295 protein GTNG_0491 from Geobacillus thermodenitrificans (strain NG80-2).